A 463-amino-acid polypeptide reads, in one-letter code: uncharacterized protein (463 aa).

It belongs to the UbiD family.

This is an uncharacterized protein from Rhodospirillum rubrum.